The sequence spans 380 residues: Cytochrome b (380 aa).

Helical transmembrane passes span 34-54 (FGSL…LLAM), 78-99 (WLIR…YLHI), 114-134 (WNTG…GYVL), and 179-199 (FFAL…IHLT). Residues His-84 and His-98 each contribute to the heme b site. Residues His-183 and His-197 each contribute to the heme b site. An a ubiquinone-binding site is contributed by His-202. A run of 4 helical transmembrane segments spans residues 227–247 (LKDI…ALFS), 289–309 (LGGV…PLLH), 321–341 (LSQL…WIGS), and 348–368 (FIII…VLFP).

Belongs to the cytochrome b family. The cytochrome bc1 complex contains 11 subunits: 3 respiratory subunits (MT-CYB, CYC1 and UQCRFS1), 2 core proteins (UQCRC1 and UQCRC2) and 6 low-molecular weight proteins (UQCRH/QCR6, UQCRB/QCR7, UQCRQ/QCR8, UQCR10/QCR9, UQCR11/QCR10 and a cleavage product of UQCRFS1). This cytochrome bc1 complex then forms a dimer. The cofactor is heme b.

It is found in the mitochondrion inner membrane. In terms of biological role, component of the ubiquinol-cytochrome c reductase complex (complex III or cytochrome b-c1 complex) that is part of the mitochondrial respiratory chain. The b-c1 complex mediates electron transfer from ubiquinol to cytochrome c. Contributes to the generation of a proton gradient across the mitochondrial membrane that is then used for ATP synthesis. This chain is Cytochrome b (MT-CYB), found in Thalassarche impavida (Albatross).